An 81-amino-acid polypeptide reads, in one-letter code: D-alanyl carrier protein (81 aa).

In terms of domain architecture, Carrier spans 1–81 (MADEAIKNGV…KIIAKVEQAQ (81 aa)). Ser39 bears the O-(pantetheine 4'-phosphoryl)serine mark.

It belongs to the DltC family. 4'-phosphopantetheine is transferred from CoA to a specific serine of apo-DCP.

The protein localises to the cytoplasm. It participates in cell wall biogenesis; lipoteichoic acid biosynthesis. Its function is as follows. Carrier protein involved in the D-alanylation of lipoteichoic acid (LTA). The loading of thioester-linked D-alanine onto DltC is catalyzed by D-alanine--D-alanyl carrier protein ligase DltA. The DltC-carried D-alanyl group is further transferred to cell membrane phosphatidylglycerol (PG) by forming an ester bond, probably catalyzed by DltD. D-alanylation of LTA plays an important role in modulating the properties of the cell wall in Gram-positive bacteria, influencing the net charge of the cell wall. In Lacticaseibacillus rhamnosus (Lactobacillus rhamnosus), this protein is D-alanyl carrier protein.